Here is a 514-residue protein sequence, read N- to C-terminus: Bifunctional NAD(P)H-hydrate repair enzyme Nnr (514 aa).

The tract at residues 1 to 218 (MKLVTSEEIK…IPIEIVNDIV (218 aa)) is NAD(P)H-hydrate epimerase. Residues 9 to 215 (IKRLEERLER…RLGIPIEIVN (207 aa)) form the YjeF N-terminal domain. Residues 59–63 (NNGGD) are NADPHX 1; for epimerase activity. N60 and D125 together coordinate K(+). The interval 129–135 (GIGLKRE) is NADPHX 1; for epimerase activity. Residue D158 participates in (6S)-NADPHX binding. Position 161 (S161) interacts with K(+). Residues 226–508 (DWELLKDIVR…KILPLAIDEV (283 aa)) enclose the YjeF C-terminal domain. The tract at residues 226–514 (DWELLKDIVR…IDEVIRRRNV (289 aa)) is ADP-dependent (S)-NAD(P)H-hydrate dehydratase. A (6S)-NADPHX-binding site is contributed by G333. Residues 382–388 (HYGEMSR) are NADPHX 2; for dehydratase activity. Residues 419–423 (KGPNS) and 439–448 (DFLLATAGSG) contribute to the ADP site. D449 serves as a coordination point for (6S)-NADPHX.

In the N-terminal section; belongs to the NnrE/AIBP family. It in the C-terminal section; belongs to the NnrD/CARKD family. It depends on K(+) as a cofactor.

The enzyme catalyses (6S)-NADHX + ADP = AMP + phosphate + NADH + H(+). It catalyses the reaction (6S)-NADPHX + ADP = AMP + phosphate + NADPH + H(+). The catalysed reaction is (6R)-NADHX = (6S)-NADHX. It carries out the reaction (6R)-NADPHX = (6S)-NADPHX. Functionally, bifunctional enzyme that catalyzes the epimerization of the S- and R-forms of NAD(P)HX and the dehydration of the S-form of NAD(P)HX at the expense of ADP, which is converted to AMP. This allows the repair of both epimers of NAD(P)HX, a damaged form of NAD(P)H that is a result of enzymatic or heat-dependent hydration. This is Bifunctional NAD(P)H-hydrate repair enzyme Nnr (nnr) from Dictyoglomus turgidum (strain DSM 6724 / Z-1310).